The sequence spans 579 residues: Tetratricopeptide repeat protein 39C (579 aa).

Residues 182–197 (QQGALASDQANHNTST) show a composition bias toward polar residues. The disordered stretch occupies residues 182–202 (QQGALASDQANHNTSTGSGGR). TPR repeat units follow at residues 311–344 (SLFI…ASDQ), 349–382 (HVCL…SRWS), and 481–514 (GLKH…EYGR).

The protein belongs to the TTC39 family.

This is Tetratricopeptide repeat protein 39C (ttc39c) from Danio rerio (Zebrafish).